Here is a 226-residue protein sequence, read N- to C-terminus: 3-isopropylmalate dehydratase small subunit (226 aa).

The interval 204–226 (EAETVESAREPEAVEWAGPLADR) is disordered.

Belongs to the LeuD family. LeuD type 1 subfamily. Heterodimer of LeuC and LeuD.

The enzyme catalyses (2R,3S)-3-isopropylmalate = (2S)-2-isopropylmalate. It participates in amino-acid biosynthesis; L-leucine biosynthesis; L-leucine from 3-methyl-2-oxobutanoate: step 2/4. In terms of biological role, catalyzes the isomerization between 2-isopropylmalate and 3-isopropylmalate, via the formation of 2-isopropylmaleate. This Bifidobacterium animalis subsp. lactis (strain AD011) protein is 3-isopropylmalate dehydratase small subunit.